Here is a 160-residue protein sequence, read N- to C-terminus: Baculoviral IAP repeat-containing protein 5.1-B (160 aa).

One copy of the BIR repeat lies at 13–83; the sequence is QRLQDFRNMY…EGWEPDDDPW (71 aa). Threonine 43 is modified (phosphothreonine; by CDK1). Residues cysteine 66, cysteine 69, histidine 86, and cysteine 93 each coordinate Zn(2+).

The protein belongs to the IAP family. In terms of assembly, component of the CPC at least composed of survivin/birc5, incenp, cdca8/borealin and/or cdca9/dasra-A, and aurkb/aurora-B. Interacts directly with incenp (via N-terminus), and may weakly interact with aurkb (via N-terminus) to stabilize the complex. Interacts with GTP-bound ran in both the S and M phases of the cell cycle. Also found in a complex with ubiquitin-mediated signaling proteins including at least usp9x/xFAM, nploc4/npl4 and ufd1. Ubiquitination is required for centrosome-targeting.

The protein resides in the cytoplasm. The protein localises to the nucleus. Its subcellular location is the chromosome. It localises to the centromere. It is found in the cytoskeleton. The protein resides in the spindle. In terms of biological role, component of the chromosomal passenger complex (CPC), a complex that acts as a key regulator of mitosis. The CPC complex has essential functions at the centromere in ensuring correct chromosome alignment and segregation and is required for chromatin-induced microtubule stabilization and spindle assembly. Stimulates the mitotic kinase activity of aurkb/aurora-B in the CPC. Does not appear to exhibit anti-apoptotic activity. CPC. Does not appear to exhibit anti-apoptotic activity. The protein is Baculoviral IAP repeat-containing protein 5.1-B (birc5.1-b) of Xenopus laevis (African clawed frog).